The sequence spans 324 residues: Ribosomal RNA small subunit methyltransferase H (324 aa).

S-adenosyl-L-methionine is bound by residues 47 to 49 (GGH), Asp67, Leu96, Asp115, and Gln122.

This sequence belongs to the methyltransferase superfamily. RsmH family.

The protein resides in the cytoplasm. The catalysed reaction is cytidine(1402) in 16S rRNA + S-adenosyl-L-methionine = N(4)-methylcytidine(1402) in 16S rRNA + S-adenosyl-L-homocysteine + H(+). Specifically methylates the N4 position of cytidine in position 1402 (C1402) of 16S rRNA. This is Ribosomal RNA small subunit methyltransferase H from Halorhodospira halophila (strain DSM 244 / SL1) (Ectothiorhodospira halophila (strain DSM 244 / SL1)).